A 179-amino-acid polypeptide reads, in one-letter code: Large ribosomal subunit protein uL5 (179 aa).

Belongs to the universal ribosomal protein uL5 family. As to quaternary structure, part of the 50S ribosomal subunit; part of the 5S rRNA/L5/L18/L25 subcomplex. Contacts the 5S rRNA and the P site tRNA. Forms a bridge to the 30S subunit in the 70S ribosome.

In terms of biological role, this is one of the proteins that bind and probably mediate the attachment of the 5S RNA into the large ribosomal subunit, where it forms part of the central protuberance. In the 70S ribosome it contacts protein S13 of the 30S subunit (bridge B1b), connecting the 2 subunits; this bridge is implicated in subunit movement. Contacts the P site tRNA; the 5S rRNA and some of its associated proteins might help stabilize positioning of ribosome-bound tRNAs. This is Large ribosomal subunit protein uL5 from Agathobacter rectalis (strain ATCC 33656 / DSM 3377 / JCM 17463 / KCTC 5835 / VPI 0990) (Eubacterium rectale).